A 140-amino-acid polypeptide reads, in one-letter code: Ribosome maturation factor RimP (140 aa).

It belongs to the RimP family.

The protein localises to the cytoplasm. Its function is as follows. Required for maturation of 30S ribosomal subunits. The polypeptide is Ribosome maturation factor RimP (Campylobacter hominis (strain ATCC BAA-381 / DSM 21671 / CCUG 45161 / LMG 19568 / NCTC 13146 / CH001A)).